The primary structure comprises 152 residues: Holo-[acyl-carrier-protein] synthase (152 aa).

Mg(2+) contacts are provided by D7 and E60.

The protein belongs to the P-Pant transferase superfamily. AcpS family. It depends on Mg(2+) as a cofactor.

It localises to the cytoplasm. It carries out the reaction apo-[ACP] + CoA = holo-[ACP] + adenosine 3',5'-bisphosphate + H(+). Functionally, transfers the 4'-phosphopantetheine moiety from coenzyme A to a Ser of acyl-carrier-protein. In Bifidobacterium adolescentis (strain ATCC 15703 / DSM 20083 / NCTC 11814 / E194a), this protein is Holo-[acyl-carrier-protein] synthase.